The sequence spans 38 residues: Large ribosomal subunit protein bL36 (38 aa).

Belongs to the bacterial ribosomal protein bL36 family.

The sequence is that of Large ribosomal subunit protein bL36 from Karelsulcia muelleri (strain GWSS) (Sulcia muelleri).